The primary structure comprises 95 residues: PIK3R3 upstream open reading frame protein (95 aa).

The disordered stretch occupies residues 1 to 27 (MGPSRLVRGPRPQGMRSPYRRPGMGWP).

The sequence is that of PIK3R3 upstream open reading frame protein from Homo sapiens (Human).